We begin with the raw amino-acid sequence, 746 residues long: Alpha-1,4-glucan:maltose-1-phosphate maltosyltransferase (746 aa).

The disordered stretch occupies residues Met1 to Glu43. Residues Thr10–Ser32 show a composition bias toward low complexity. Residues Lys343, Gln403, and Asp438 each coordinate alpha-maltose 1-phosphate. Asp473 (nucleophile) is an active-site residue. An alpha-maltose 1-phosphate-binding site is contributed by Asn474. The active-site Proton donor is Glu502. Lys612–Tyr613 contacts alpha-maltose 1-phosphate.

The protein belongs to the glycosyl hydrolase 13 family. GlgE subfamily. In terms of assembly, homodimer.

It carries out the reaction alpha-maltose 1-phosphate + [(1-&gt;4)-alpha-D-glucosyl](n) = [(1-&gt;4)-alpha-D-glucosyl](n+2) + phosphate. Maltosyltransferase that uses maltose 1-phosphate (M1P) as the sugar donor to elongate linear or branched alpha-(1-&gt;4)-glucans. Is involved in a branched alpha-glucan biosynthetic pathway from trehalose, together with TreS, Mak and GlgB. The protein is Alpha-1,4-glucan:maltose-1-phosphate maltosyltransferase of Bifidobacterium longum (strain NCC 2705).